The chain runs to 286 residues: Urease accessory protein UreD 2 (286 aa).

Belongs to the UreD family. UreD, UreF and UreG form a complex that acts as a GTP-hydrolysis-dependent molecular chaperone, activating the urease apoprotein by helping to assemble the nickel containing metallocenter of UreC. The UreE protein probably delivers the nickel.

The protein resides in the cytoplasm. In terms of biological role, required for maturation of urease via the functional incorporation of the urease nickel metallocenter. The sequence is that of Urease accessory protein UreD 2 from Bradyrhizobium sp. (strain ORS 278).